Here is a 372-residue protein sequence, read N- to C-terminus: Transaldolase (372 aa).

Lys140 acts as the Schiff-base intermediate with substrate in catalysis.

Belongs to the transaldolase family. Type 2 subfamily.

The protein localises to the cytoplasm. It carries out the reaction D-sedoheptulose 7-phosphate + D-glyceraldehyde 3-phosphate = D-erythrose 4-phosphate + beta-D-fructose 6-phosphate. Its pathway is carbohydrate degradation; pentose phosphate pathway; D-glyceraldehyde 3-phosphate and beta-D-fructose 6-phosphate from D-ribose 5-phosphate and D-xylulose 5-phosphate (non-oxidative stage): step 2/3. In terms of biological role, transaldolase is important for the balance of metabolites in the pentose-phosphate pathway. This is Transaldolase from Acidothermus cellulolyticus (strain ATCC 43068 / DSM 8971 / 11B).